Reading from the N-terminus, the 480-residue chain is Ribulose bisphosphate carboxylase large chain (480 aa).

A propeptide spanning residues Met1–Ser2 is cleaved from the precursor. The residue at position 3 (Pro3) is an N-acetylproline. At Lys14 the chain carries N6,N6,N6-trimethyllysine. Residues Asn123 and Thr173 each coordinate substrate. Lys175 serves as the catalytic Proton acceptor. Residue Lys177 participates in substrate binding. Residues Lys201, Asp203, and Glu204 each contribute to the Mg(2+) site. Lys201 is modified (N6-carboxylysine). Catalysis depends on His294, which acts as the Proton acceptor. Positions 295, 327, and 379 each coordinate substrate.

Belongs to the RuBisCO large chain family. Type I subfamily. As to quaternary structure, heterohexadecamer of 8 large chains and 8 small chains; disulfide-linked. The disulfide link is formed within the large subunit homodimers. Requires Mg(2+) as cofactor. Post-translationally, the disulfide bond which can form in the large chain dimeric partners within the hexadecamer appears to be associated with oxidative stress and protein turnover.

It is found in the plastid. It localises to the chloroplast. The enzyme catalyses 2 (2R)-3-phosphoglycerate + 2 H(+) = D-ribulose 1,5-bisphosphate + CO2 + H2O. It catalyses the reaction D-ribulose 1,5-bisphosphate + O2 = 2-phosphoglycolate + (2R)-3-phosphoglycerate + 2 H(+). RuBisCO catalyzes two reactions: the carboxylation of D-ribulose 1,5-bisphosphate, the primary event in carbon dioxide fixation, as well as the oxidative fragmentation of the pentose substrate in the photorespiration process. Both reactions occur simultaneously and in competition at the same active site. The sequence is that of Ribulose bisphosphate carboxylase large chain from Gossypium barbadense (Sea Island cotton).